The following is a 384-amino-acid chain: Probable protein phosphatase 2C 48 (384 aa).

The region spanning 47 to 358 (ITGEFSMAVV…DDITVIVVFL (312 aa)) is the PPM-type phosphatase domain. Ser-78 is subject to Phosphoserine. 4 residues coordinate Mn(2+): Asp-89, Gly-90, Asp-290, and Asp-349.

Belongs to the PP2C family. Mg(2+) serves as cofactor. Mn(2+) is required as a cofactor.

It catalyses the reaction O-phospho-L-seryl-[protein] + H2O = L-seryl-[protein] + phosphate. The catalysed reaction is O-phospho-L-threonyl-[protein] + H2O = L-threonyl-[protein] + phosphate. Its function is as follows. May dephosphorylate and repress plasma membrane H(+)-ATPases (PM H(+)-ATPases, e.g. AHA1 and AHA2), thus influencing negatively plant growth and fitness. The protein is Probable protein phosphatase 2C 48 of Arabidopsis thaliana (Mouse-ear cress).